The following is a 2139-amino-acid chain: Voltage-dependent L-type calcium channel subunit alpha-1C (2139 aa).

The disordered stretch occupies residues 1–20 (MVNENTRMYVPEENHQGSNY). At 1–124 (MVNENTRMYV…RACISIVEWK (124 aa)) the chain is on the cytoplasmic side. Residues 47–68 (GAALSWQAAIDAARQAKLMGSA) are calmodulin-binding. A disordered region spans residues 73 to 98 (ISTVSSTQRKRQQYGKPKKQGGTTAT). Residues 80–91 (QRKRQQYGKPKK) are compositionally biased toward basic residues. An I repeat occupies 111-408 (NPIRRACISI…LVLGVLSGEF (298 aa)). A helical membrane pass occupies residues 125-143 (PFEIIILLTIFANCVALAI). Over 144-158 (YIPFPEDDSNATNSN) the chain is Extracellular. N-linked (GlcNAc...) asparagine glycosylation is present at Asn-153. Residues 159 to 179 (LERVEYLFLIIFTVEAFLKVI) traverse the membrane as a helical segment. The Cytoplasmic portion of the chain corresponds to 180 to 188 (AYGLLFHPN). A helical transmembrane segment spans residues 189–209 (AYLRNGWNLLDFIIVVVGLFS). Residues 210-232 (AILEQATKADGANALGGKGAGFD) are Extracellular-facing. The helical transmembrane segment at 233 to 251 (VKALRAFRVLRPLRLVSGV) threads the bilayer. Topologically, residues 252 to 268 (PSLQVVLNSIIKAMVPL) are cytoplasmic. Residues 269–290 (LHIALLVLFVIIIYAIIGLELF) form a helical membrane-spanning segment. Residues 291-350 (MGKMHKTCYNQEGIIDVPAEEDPSPCALETGHGRQCQNGTVCKPGWDGPKHGITNFDNFA) lie on the Extracellular side of the membrane. 2 disulfide bridges follow: Cys-298-Cys-326 and Cys-316-Cys-332. The N-linked (GlcNAc...) asparagine glycan is linked to Asn-328. The pore-forming intramembrane region spans 351 to 372 (FAMLTVFQCITMEGWTDVLYWM). The short motif at 361 to 364 (TMEG) is the Selectivity filter of repeat I element. Glu-363 serves as a coordination point for Ca(2+). Residues 373–380 (QDAMGYEL) are Extracellular-facing. A helical transmembrane segment spans residues 381–401 (PWVYFVSLVIFGSFFVLNLVL). Residues 402 to 524 (GVLSGEFSKE…RKCRAAVKSN (123 aa)) lie on the Cytoplasmic side of the membrane. The segment at 428-445 (QQLEEDLKGYLDWITQAE) is AID/alpha-interaction domain; mediates interaction with the beta subunit. Residues 449-481 (PENEDEGMDEDKPRNMSMPTSETESVNTENVAG) form a disordered region. Residues 465–478 (SMPTSETESVNTEN) are compositionally biased toward polar residues. Residue Ser-469 is modified to Phosphoserine. The residue at position 476 (Thr-476) is a Phosphothreonine. An II repeat occupies 510–756 (NRFCRRKCRA…VFLAIAVDNL (247 aa)). A helical membrane pass occupies residues 525–543 (VFYWLVIFLVFLNTLTIAS). At 544-554 (EHYNQPHWLTE) the chain is on the extracellular side. A helical transmembrane segment spans residues 555-575 (VQDTANKALLALFTAEMLLKM). The Cytoplasmic segment spans residues 576 to 586 (YSLGLQAYFVS). The helical transmembrane segment at 587 to 606 (LFNRFDCFIVCGGILETILV) threads the bilayer. Residues 607 to 615 (ETKIMSPLG) are Extracellular-facing. Residues 616 to 634 (ISVLRCVRLLRIFKITRYW) form a helical membrane-spanning segment. Residues 635-653 (NSLSNLVASLLNSVRSIAS) lie on the Cytoplasmic side of the membrane. A helical membrane pass occupies residues 654–673 (LLLLLFLFIIIFSLLGMQLF). Residues 674–693 (GGKFNFDEMQTRRSTFDNFP) lie on the Extracellular side of the membrane. Residues 694–715 (QSLLTVFQILTGEDWNSVMYDG) constitute an intramembrane region (pore-forming). The short motif at 704–707 (TGED) is the Selectivity filter of repeat II element. Glu-706 contacts Ca(2+). Topologically, residues 716–725 (IMAYGGPSFP) are extracellular. Residues 726–745 (GMLVCIYFIILFICGNYILL) traverse the membrane as a helical segment. The Cytoplasmic portion of the chain corresponds to 746–900 (NVFLAIAVDN…LQCHRIVNDT (155 aa)). The tract at residues 764-861 (SAQKEEEEEK…EMPVGPRPRP (98 aa)) is disordered. A compositionally biased stretch (basic and acidic residues) spans 783 to 806 (SPEKKQEVMEKPAVEESKEEKIEL). Phosphoserine is present on residues Ser-808 and Ser-815. The tract at residues 829-876 (SENEDKSPHSNPDTAGEEDEEEPEMPVGPRPRPLSELHLKEKAVPMPE) is interaction with STAC2. The segment covering 843-852 (AGEEDEEEPE) has biased composition (acidic residues). The stretch at 887-1169 (NRFRLQCHRI…IFVGFVIVTF (283 aa)) is one III repeat. A helical transmembrane segment spans residues 901–919 (IFTNLILFFILLSSISLAA). The Extracellular portion of the chain corresponds to 920–931 (EDPVQHTSFRNH). Residues 932–951 (ILGNADYVFTSIFTLEIILK) traverse the membrane as a helical segment. The Cytoplasmic segment spans residues 952–967 (MTAYGAFLHKGSFCRN). A helical transmembrane segment spans residues 968-986 (YFNILDLLVVSVSLISFGI). The Extracellular portion of the chain corresponds to 987–993 (QSSAINV). The helical transmembrane segment at 994 to 1012 (VKILRVLRVLRPLRAINRA) threads the bilayer. Residues 1013 to 1031 (KGLKHVVQCVFVAIRTIGN) lie on the Cytoplasmic side of the membrane. A helical transmembrane segment spans residues 1032 to 1051 (IVIVTTLLQFMFACIGVQLF). Over 1052 to 1101 (KGKLYTCSDSSKQTEAECKGNYITYKDGEVDHPIIQPRSWENSKFDFDNV) the chain is Extracellular. Cys-1058 and Cys-1069 are joined by a disulfide. Residues 1089-1178 (RSWENSKFDF…FQEQGEQEYK (90 aa)) are dihydropyridine binding. Residues 1102 to 1122 (LAAMMALFTVSTFEGWPELLY) constitute an intramembrane region (pore-forming). Residues 1113 to 1116 (TFEG) carry the Selectivity filter of repeat III motif. Residue Glu-1115 coordinates Ca(2+). Topologically, residues 1123 to 1139 (RSIDSHTEDKGPIYNYR) are extracellular. A helical membrane pass occupies residues 1140–1161 (VEISIFFIIYIIIIAFFMMNIF). Over 1162–1219 (VGFVIVTFQEQGEQEYKNCELDKNQRQCVEYALKARPLRRYIPKNQHQYKVWYVVNST) the chain is Cytoplasmic. An IV repeat occupies 1206–1479 (NQHQYKVWYV…LFVAVIMDNF (274 aa)). The helical transmembrane segment at 1220–1241 (YFEYLMFVLILLNTICLAMQHY) threads the bilayer. The Extracellular portion of the chain corresponds to 1242–1249 (GQSCLFKI). The helical transmembrane segment at 1250–1271 (AMNILNMLFTGLFTVEMILKLI) threads the bilayer. Residues 1272-1281 (AFKPKGYFSD) are Cytoplasmic-facing. Residues 1282–1301 (PWNVFDFLIVIGSIIDVILS) form a helical membrane-spanning segment. The Extracellular portion of the chain corresponds to 1302–1324 (ETNPAEHTQCSPSMSAEENSRIS). The chain crosses the membrane as a helical span at residues 1325–1343 (ITFFRLFRVMRLVKLLSRG). Residues 1344 to 1361 (EGIRTLLWTFIKSFQALP) lie on the Cytoplasmic side of the membrane. The helical transmembrane segment at 1362–1382 (YVALLIVMLFFIYAVIGMQVF) threads the bilayer. The Extracellular segment spans residues 1383–1404 (GKIALNDTTEINRNNNFQTFPQ). N-linked (GlcNAc...) asparagine glycosylation is present at Asn-1388. The pore-forming intramembrane region spans 1405–1423 (AVLLLFRCATGEAWQDIML). The Selectivity filter of repeat IV motif lies at 1414–1417 (TGEA). The Extracellular segment spans residues 1424–1451 (ACMPGKKCAPESEPSNSTEGETPCGSSF). A dihydropyridine binding region spans residues 1430–1498 (KCAPESEPSN…LGPHHLDEFK (69 aa)). Residues Cys-1431 and Cys-1447 are joined by a disulfide bond. N-linked (GlcNAc...) asparagine glycosylation occurs at Asn-1439. A phenylalkylamine binding region spans residues 1444-1486 (ETPCGSSFAVFYFISFYMLCAFLIINLFVAVIMDNFDYLTRDW). The chain crosses the membrane as a helical span at residues 1452-1476 (AVFYFISFYMLCAFLIINLFVAVIM). Residues 1477 to 2139 (DNFDYLTRDW…ADSRSYVSNL (663 aa)) lie on the Cytoplasmic side of the membrane. Positions 1611 to 1638 (DEVTVGKFYATFLIQEYFRKFKKRKEQG) are important for interaction with STAC1, STAC2 and STAC3. The calmodulin-binding stretch occupies residues 1611–1644 (DEVTVGKFYATFLIQEYFRKFKKRKEQGLVGKPS). The interval 1617 to 1637 (KFYATFLIQEYFRKFKKRKEQ) is calmodulin-binding IQ region. Residues 1651–1670 (LQAGLRTLHDIGPEIRRAIS) form an important for localization in at the junctional membrane region. Residues Ser-1670 and Ser-1691 each carry the phosphoserine modification. 2 stretches are compositionally biased toward polar residues: residues 1732–1741 (KTGNNQADTE) and 1751–1763 (STFT…STGS). Residues 1732–1773 (KTGNNQADTESPSHEKLVDSTFTPSSYSSTGSNANINNANNT) form a disordered region. Residues 1764–1773 (NANINNANNT) are compositionally biased toward low complexity. Ser-1897 carries the phosphoserine; by PKA modification. Residues 1940 to 1966 (RSHSPTTFPRPCPTPPVTPGSRGRPLR) are disordered. Pro residues predominate over residues 1947-1957 (FPRPCPTPPVT).

It belongs to the calcium channel alpha-1 subunit (TC 1.A.1.11) family. CACNA1C subfamily. In terms of assembly, component of a calcium channel complex consisting of a pore-forming alpha subunit (CACNA1C) and ancillary beta, gamma and delta subunits. The channel complex contains alpha, beta, gamma and delta subunits in a 1:1:1:1 ratio, i.e. it contains only one of each type of subunit. CACNA1C channel activity is modulated by ancillary subunits, such as CACNB1, CACNB2, CACNB3, CACNA2D1 and CACNA2D4. Interacts with the gamma subunits CACNG4, CACNG6, CACNG7 and CACNG8. Interacts with CACNB1. Interacts with CACNB2. Identified in a complex with CACNA2D4 and CACNB3. Interacts with CACNB3. Interacts with CACNA2D1. Interacts with CACNA2D4. Interacts with CALM1. Interacts (via the N-terminus and the C-terminal C and IQ motifs) with CABP1; this inhibits Ca(2+)-dependent channel inactivation. The binding via the C motif is calcium independent whereas the binding via IQ requires the presence of calcium and is mutually exclusive with calmodulin binding. The binding to the cytoplasmic N-terminal domain is calcium independent but is essential for the channel modulation. Interacts (via C-terminal CDB motif) with CABP5; in a calcium-dependent manner. Interacts with CIB1; the interaction increases upon cardiomyocytes hypertrophy. Interacts with STAC2 and STAC3; this inhibits channel inactivation. In terms of processing, phosphorylation by PKA at Ser-1897 activates the channel. Elevated levels of blood glucose lead to increased phosphorylation by PKA. Detected in embryonic heart. Detected in retina in rod bipolar cells. Detected in tibialis artery (at protein level). Detected in smooth muscle cells from tibialis artery and in mesenteric artery. High expression in heart, followed by brain and spinal cord.

It is found in the cell membrane. Its subcellular location is the sarcolemma. It localises to the perikaryon. The protein localises to the postsynaptic density membrane. The protein resides in the cell projection. It is found in the dendrite. Its subcellular location is the T-tubule. The catalysed reaction is Ca(2+)(in) = Ca(2+)(out). With respect to regulation, inhibited by dihydropyridines (DHP), such as isradipine. Inhibited by nifedipine. Channel activity is regulated by Ca(2+) and calmodulin. Binding of STAC1, STAC2 or STAC3 to a region that overlaps with the calmodulin binding site inhibits channel inactivation by Ca(2+) and calmodulin. Binding of calmodulin or CABP1 at the same regulatory sites results in opposite effects on the channel function. Shear stress and pressure increases calcium channel activity. Functionally, pore-forming, alpha-1C subunit of the voltage-gated calcium channel that gives rise to L-type calcium currents. Mediates influx of calcium ions into the cytoplasm, and thereby triggers calcium release from the sarcoplasm. Plays an important role in excitation-contraction coupling in the heart. Required for normal heart development and normal regulation of heart rhythm. Required for normal contraction of smooth muscle cells in blood vessels and in the intestine. Essential for normal blood pressure regulation via its role in the contraction of arterial smooth muscle cells. Long-lasting (L-type) calcium channels belong to the 'high-voltage activated' (HVA) group. This is Voltage-dependent L-type calcium channel subunit alpha-1C (Cacna1c) from Mus musculus (Mouse).